The sequence spans 446 residues: SPARC-related modular calcium-binding protein 2 (446 aa).

The N-terminal stretch at 1 to 21 (MLLPQLCWLPLLAGLLPPVPA) is a signal peptide. The Kazal-like domain maps to 34 to 86 (QDKDKDCSLDCAGSPQKPLCASDGRTFLSRCEFQRAKCKDPQLEIAYRGNCKD). 6 cysteine pairs are disulfide-bonded: cysteine 40–cysteine 71, cysteine 44–cysteine 64, cysteine 53–cysteine 84, cysteine 90–cysteine 113, cysteine 124–cysteine 131, and cysteine 133–cysteine 153. Residues 87–153 (VSRCVAERKY…TAVAHKTPRC (67 aa)) enclose the Thyroglobulin type-1 1 domain. A disordered region spans residues 147 to 228 (AHKTPRCPGS…EHQSALEEAK (82 aa)). Residues 161–172 (LPQREGTGKTDD) show a composition bias toward basic and acidic residues. Asparagine 206 is a glycosylation site (N-linked (GlcNAc...) asparagine). The span at 206–216 (NKTNKNSVSSC) shows a compositional bias: polar residues. The Thyroglobulin type-1 2 domain maps to 213–281 (VSSCDQEHQS…TSTRYEQPKC (69 aa)). Intrachain disulfides connect cysteine 216–cysteine 240, cysteine 251–cysteine 258, and cysteine 260–cysteine 281. The span at 217 to 228 (DQEHQSALEEAK) shows a compositional bias: basic and acidic residues. 2 consecutive EF-hand domains span residues 347–382 (LEER…LRKK) and 384–419 (KPKK…AKED). Ca(2+)-binding residues include aspartate 360, asparagine 362, serine 364, aspartate 366, glutamate 371, aspartate 397, asparagine 399, aspartate 401, serine 403, and glutamate 408. The N-linked (GlcNAc...) asparagine glycan is linked to asparagine 362. The disordered stretch occupies residues 416-446 (AKEDGKADTKKRHTPRGHAESTSNRQPRKQG).

In terms of assembly, binds various proteins from the extracellular matrix.

The protein resides in the secreted. The protein localises to the extracellular space. Its subcellular location is the extracellular matrix. It is found in the basement membrane. In terms of biological role, promotes matrix assembly and cell adhesiveness. Can stimulate endothelial cell proliferation, migration, as well as angiogenesis. The sequence is that of SPARC-related modular calcium-binding protein 2 (SMOC2) from Homo sapiens (Human).